A 156-amino-acid chain; its full sequence is Small ribosomal subunit protein uS7 (156 aa).

The protein belongs to the universal ribosomal protein uS7 family. Part of the 30S ribosomal subunit. Contacts proteins S9 and S11.

In terms of biological role, one of the primary rRNA binding proteins, it binds directly to 16S rRNA where it nucleates assembly of the head domain of the 30S subunit. Is located at the subunit interface close to the decoding center, probably blocks exit of the E-site tRNA. The protein is Small ribosomal subunit protein uS7 of Mycobacterium ulcerans (strain Agy99).